The following is a 162-amino-acid chain: Lipid droplet assembly factor 1-A (162 aa).

Topologically, residues 1–42 (MASAENLYQEKMQELQKQMNKVMQTINNHSKVEAFLNSPFGQ) are cytoplasmic. Residues 43 to 63 (YLDQHPFVTLSLLVFISLSAV) form a helical membrane-spanning segment. Residues 64–65 (PV) lie on the Lumenal side of the membrane. The helical transmembrane segment at 66–86 (GIFLTLIAGTAIAVCLAVLII) threads the bilayer. Residue Glu87 is a topological domain, cytoplasmic. Residues 88 to 108 (GIVISVGGIALLCILCGLAVM) traverse the membrane as a helical segment. Position 109 (Ser109) is a topological domain, lumenal. The helical transmembrane segment at 110 to 130 (LGVAAVLCVSYVAGSSVLNYI) threads the bilayer. At 131 to 162 (HAYRVTVGTRGRSGPISLNHETTTAEKSYRSS) the chain is on the cytoplasmic side.

The protein belongs to the LDAF1 family.

It is found in the endoplasmic reticulum membrane. It localises to the lipid droplet. Its function is as follows. Plays an important role in the formation of lipid droplets (LD) which are storage organelles at the center of lipid and energy homeostasis. The chain is Lipid droplet assembly factor 1-A from Xenopus laevis (African clawed frog).